We begin with the raw amino-acid sequence, 60 residues long: Large ribosomal subunit protein bL33 (60 aa).

Belongs to the bacterial ribosomal protein bL33 family.

This is Large ribosomal subunit protein bL33 from Cytophaga hutchinsonii (strain ATCC 33406 / DSM 1761 / CIP 103989 / NBRC 15051 / NCIMB 9469 / D465).